We begin with the raw amino-acid sequence, 159 residues long: Ribosomal RNA large subunit methyltransferase H (159 aa).

S-adenosyl-L-methionine is bound by residues L76 and G108.

This sequence belongs to the RNA methyltransferase RlmH family. Homodimer.

The protein resides in the cytoplasm. It catalyses the reaction pseudouridine(1915) in 23S rRNA + S-adenosyl-L-methionine = N(3)-methylpseudouridine(1915) in 23S rRNA + S-adenosyl-L-homocysteine + H(+). Its function is as follows. Specifically methylates the pseudouridine at position 1915 (m3Psi1915) in 23S rRNA. The protein is Ribosomal RNA large subunit methyltransferase H of Limosilactobacillus reuteri (strain DSM 20016) (Lactobacillus reuteri).